Consider the following 241-residue polypeptide: Ribonuclease PH (241 aa).

Phosphate-binding positions include Arg89 and 127 to 129 (GTR).

It belongs to the RNase PH family. In terms of assembly, homohexameric ring arranged as a trimer of dimers.

It carries out the reaction tRNA(n+1) + phosphate = tRNA(n) + a ribonucleoside 5'-diphosphate. Functionally, phosphorolytic 3'-5' exoribonuclease that plays an important role in tRNA 3'-end maturation. Removes nucleotide residues following the 3'-CCA terminus of tRNAs; can also add nucleotides to the ends of RNA molecules by using nucleoside diphosphates as substrates, but this may not be physiologically important. Probably plays a role in initiation of 16S rRNA degradation (leading to ribosome degradation) during starvation. In Xylella fastidiosa (strain M23), this protein is Ribonuclease PH.